Here is a 469-residue protein sequence, read N- to C-terminus: Interstitial collagenase (469 aa).

An N-terminal signal peptide occupies residues 1-19 (MFSLLLLLLLLCNTGSHGF). Positions 20–99 (PAATSETQEQ…PRCGVPDVAE (80 aa)) are cleaved as a propeptide — activation peptide. Ser-57 bears the Phosphoserine mark. Positions 90 to 97 (PRCGVPDV) match the Cysteine switch motif. Cys-92 serves as a coordination point for Zn(2+). Asn-120 carries N-linked (GlcNAc...) asparagine glycosylation. Ca(2+)-binding residues include Asp-124 and Asp-158. Zn(2+) contacts are provided by His-168 and Asp-170. 4 residues coordinate Ca(2+): Asp-175, Gly-176, Gly-178, and Asn-180. His-183 is a Zn(2+) binding site. Gly-190, Gly-192, and Asp-194 together coordinate Ca(2+). His-196 serves as a coordination point for Zn(2+). Ca(2+) is bound by residues Asp-198, Glu-199, and Glu-201. His-218 lines the Zn(2+) pocket. Glu-219 is an active-site residue. The Zn(2+) site is built by His-222 and His-228. A Phosphothreonine modification is found at Thr-274. Hemopexin repeat units lie at residues 275 to 324 (PQVC…WPQV), 325 to 371 (PNGL…FGFP), 374 to 422 (VKNI…FPGI), and 423 to 466 (GNKV…WFNC). Cys-278 and Cys-466 are oxidised to a cystine. Ca(2+)-binding residues include Asp-285 and Gln-329. Tyr-360 bears the Phosphotyrosine; by PKDCC mark. Ca(2+) contacts are provided by Asp-378 and Asp-427.

It belongs to the peptidase M10A family. Requires Ca(2+) as cofactor. It depends on Zn(2+) as a cofactor. Undergoes autolytic cleavage to produce a N-terminal fragment having reduced collagenolytic activity. Post-translationally, tyrosine phosphorylated in platelets by PKDCC/VLK.

The protein resides in the secreted. Its subcellular location is the extracellular space. It is found in the extracellular matrix. It catalyses the reaction Cleavage of the triple helix of collagen at about three-quarters of the length of the molecule from the N-terminus, at 775-Gly-|-Ile-776 in the alpha1(I) chain. Cleaves synthetic substrates and alpha-macroglobulins at bonds where P1' is a hydrophobic residue.. Its activity is regulated as follows. Can be activated without removal of the activation peptide. In terms of biological role, cleaves collagens of types I, II, and III at one site in the helical domain. Also cleaves collagens of types VII and X. The protein is Interstitial collagenase (MMP1) of Sus scrofa (Pig).